The following is a 321-amino-acid chain: Beta-ketoacyl-[acyl-carrier-protein] synthase III (321 aa).

Active-site residues include Cys114 and His248. The tract at residues 249–253 (QANKR) is ACP-binding. Asn278 is an active-site residue.

This sequence belongs to the thiolase-like superfamily. FabH family. Homodimer.

Its subcellular location is the cytoplasm. The catalysed reaction is malonyl-[ACP] + acetyl-CoA + H(+) = 3-oxobutanoyl-[ACP] + CO2 + CoA. Its pathway is lipid metabolism; fatty acid biosynthesis. Its function is as follows. Catalyzes the condensation reaction of fatty acid synthesis by the addition to an acyl acceptor of two carbons from malonyl-ACP. Catalyzes the first condensation reaction which initiates fatty acid synthesis and may therefore play a role in governing the total rate of fatty acid production. Possesses both acetoacetyl-ACP synthase and acetyl transacylase activities. Its substrate specificity determines the biosynthesis of branched-chain and/or straight-chain of fatty acids. The protein is Beta-ketoacyl-[acyl-carrier-protein] synthase III of Sphingopyxis alaskensis (strain DSM 13593 / LMG 18877 / RB2256) (Sphingomonas alaskensis).